Reading from the N-terminus, the 477-residue chain is Charged multivesicular body protein 7 (477 aa).

Coiled coils occupy residues 252–280 and 382–428; these read KLQT…TIKE and ESLS…QQQQ. Basic and acidic residues-rich tracts occupy residues 411–424 and 465–477; these read EEKQ…KEKQ and KQDE…SELI. The segment at 411–477 is disordered; that stretch reads EEKQKQKQIE…ENKQKTSELI (67 aa).

Belongs to the SNF7 family.

It localises to the cytoplasm. Plays a role in the endosomal sorting pathway. The protein is Charged multivesicular body protein 7 (chmp7) of Dictyostelium discoideum (Social amoeba).